We begin with the raw amino-acid sequence, 95 residues long: MNDLIDKLLAWRGSGKSGDQAKKRLKLILAHDRADLSPELLSMMRQEILEVVGRYLDIDTEETELLLESDQRTTALIANFPIRRIKRRPLTEKLP.

This sequence belongs to the MinE family.

Its function is as follows. Prevents the cell division inhibition by proteins MinC and MinD at internal division sites while permitting inhibition at polar sites. This ensures cell division at the proper site by restricting the formation of a division septum at the midpoint of the long axis of the cell. The polypeptide is Cell division topological specificity factor (Microcystis aeruginosa (strain NIES-843 / IAM M-2473)).